The following is a 549-amino-acid chain: MRRPRGEPGPRAPRPTEGATCAGPGESWSPSPNSMLRVLLSAQTSPARLSGLLLIPPVQPCCLGPSKWGDRPVGGGPSAGPVQGLQRLLEQAKSPGELLRWLGQNPSKVRAHHYSVALRRLGQLLGSRPRPPPVEQVTLQDLSQLIIRNCPSFDIHTIHVCLHLAVLLGFPSDGPLVCALEQERRLRLPPKPPPPLQPLLRGGQGLEAALSCPRFLRYPRQHLISSLAEARPEELTPHVMVLLAQHLARHRLREPQLLEAIAHFLVVQETQLSSKVVQKLVLPFGRLNYLPLEQQFMPCLERILAREAGVAPLATVNILMSLCQLRCLPFRALHFVFSPGFINYISGTPHALIVRRYLSLLDTAVELELPGYRGPRLPRRQQVPIFPQPLITDRARCKYSHKDIVAEGLRQLLGEEKYRQDLTVPPGYCTDFLLCASSSGAVLPVRTQDPFLPYPPRSCPQGQAASSATTRDPAQRVVLVLRERWHFCRDGRVLLGSRALRERHLGLMGYQLLPLPFEELESQRGLPQLKSYLRQKLQALGLRWGPEGG.

A disordered region spans residues 1–30 (MRRPRGEPGPRAPRPTEGATCAGPGESWSP). The RAP domain maps to 477 to 535 (VVLVLRERWHFCRDGRVLLGSRALRERHLGLMGYQLLPLPFEELESQRGLPQLKSYLRQ).

It belongs to the FAST protein kinase family. As to quaternary structure, interacts with TIA1; the interactions leads to TIA1 phosphorylation. Interacts with TIAR. In terms of processing, autophosphorylated on serine/threonine residues. Activated by dephosphorylation. Expressed in heart, brain, placenta, lung, liver, skeletal muscle, kidney and pancreas.

It is found in the mitochondrion matrix. It catalyses the reaction L-seryl-[Fas-activated protein] + ATP = O-phospho-L-seryl-[Fas-activated protein] + ADP + H(+). The catalysed reaction is L-threonyl-[Fas-activated protein] + ATP = O-phospho-L-threonyl-[Fas-activated protein] + ADP + H(+). The enzyme catalyses L-seryl-[protein] + ATP = O-phospho-L-seryl-[protein] + ADP + H(+). It carries out the reaction L-threonyl-[protein] + ATP = O-phospho-L-threonyl-[protein] + ADP + H(+). Phosphorylates the splicing regulator TIA1, thereby promoting the inclusion of FAS exon 6, which leads to an mRNA encoding a pro-apoptotic form of the receptor. In terms of biological role, required for the biogenesis of some mitochondrial-encoded mRNAs, specifically stabilizes ND6 (NADH dehydrogenase complex subunit 6) mRNA, and regulates its levels. This Homo sapiens (Human) protein is Fas-activated serine/threonine kinase (FASTK).